A 3175-amino-acid chain; its full sequence is Replicase polyprotein 1ab (3175 aa).

The C4-type; atypical zinc-finger motif lies at 25-44 (CEHGAGLCCEVDGSTLCAEC). The region spanning 66 to 156 (SPVPVGHKFL…PAANSLIVTT (91 aa)) is the Peptidase C31 domain. Residues 157-260 (DQEQDGFCWL…WSCLPAGNYG (104 aa)) enclose the Peptidase C32 domain. Catalysis depends on for Nsp1 papain-like cysteine proteinase activity residues Cys164 and His230. Positions 261–339 (GYNPPGDGAC…KQHWRVKRAK (79 aa)) are OTU-like. Residues 261–360 (GYNPPGDGAC…RGICNCQRMS (100 aa)) enclose the Peptidase C33 domain. Residue Cys270 is the For Nsp2 cysteine proteinase activity of the active site. Residue Cys319 participates in Zn(2+) binding. His332 (for Nsp2 cysteine proteinase activity) is an active-site residue. Residues Cys349, Cys354, and Cys356 each contribute to the Zn(2+) site. The disordered stretch occupies residues 386-451 (VVTPEGQPRP…TRLQGASTQE (66 aa)). 7 consecutive transmembrane segments (helical) span residues 530-550 (AVIA…SFAI), 551-571 (GLIP…SSAN), 625-645 (FDAA…ILYL), 829-849 (LIGG…STFT), 903-923 (YWIA…RLAI), 935-955 (LVLL…SLAG), and 977-997 (LVTM…LMGL). Positions 530 to 645 (AVIACLLPIW…DLCSFAILYL (116 aa)) are HD1. Positions 829–997 (LIGGWIYGIC…ALAVYSLMGL (169 aa)) are HD2. Residues 1065 to 1268 (GLFRSPKARG…MLIDGLSNRE (204 aa)) form the Peptidase S32 domain. Residues His1103, Asp1129, and Ser1184 each act as charge relay system; for 3C-like serine proteinase activity in the active site. A run of 4 helical transmembrane segments spans residues 1291 to 1311 (AYLP…KSVG), 1333 to 1353 (CLFH…WFYI), 1355 to 1375 (AAGT…MLFV), and 1385 to 1405 (GWAI…AALG). Residues 1291-1405 (AYLPYVLGFF…SITMLAAALG (115 aa)) form an HD3 region. An N-linked (GlcNAc...) asparagine; by host glycan is attached at Asn1501. Residues 1577–1614 (NDTPVKPMPSRRRRKGLPKGAQLEWDRHQEEKRNAGDD) are disordered. Residues 1600 to 1612 (EWDRHQEEKRNAG) show a composition bias toward basic and acidic residues. The region spanning 1716–1883 (LANPVEAVNQ…DKVAAAVSGD (168 aa)) is the NiRAN domain. The RdRp catalytic domain maps to 2116-2251 (KYCLETDLES…TTPNQHYAAS (136 aa)). An AV ZBD domain is found at 2371-2438 (SAVCTVCGAA…SPKQMVPKVP (68 aa)). Residues Cys2374, Cys2377, Cys2387, Cys2392, Cys2395, His2399, His2402, Cys2403, Cys2412, His2414, Cys2423, and Cys2426 each coordinate Zn(2+). In terms of domain architecture, (+)RNA virus helicase ATP-binding spans 2496–2661 (PGSHIAVPLQ…LRHFVSLEPL (166 aa)). 2528–2535 (GPPGSGKT) is an ATP binding site. Residues 2662–2793 (RVCHRFGAAV…PPTACHLGQE (132 aa)) enclose the (+)RNA virus helicase C-terminal domain. Positions 2840-2930 (KISCLPRVAQ…LTEWVDGKAR (91 aa)) constitute an AV-Nsp11N/CoV-Nsp15M domain. In terms of domain architecture, NendoU spans 2932 to 3054 (LPDSLFSSGR…MVWRNATFYV (123 aa)). Active-site residues include His2963, His2978, and Lys3007.

Belongs to the arteriviridae polyprotein family. As to quaternary structure, nsp1 interacts with cellular transcription cofactor SND1/p100. In terms of processing, specific enzymatic cleavages in vivo by its own proteases yield mature proteins. There are two alternative pathways for processing. Either nsp4-5 is cleaved, which represents the major pathway or the nsp5-6 and nsp6-7 are processed, which represents the minor pathway. The major pathway occurs when nsp2 acts as a cofactor for nsp4.

The protein resides in the host nucleus. It is found in the host cytoplasm. Its subcellular location is the host membrane. The protein localises to the host perinuclear region. It catalyses the reaction RNA(n) + a ribonucleoside 5'-triphosphate = RNA(n+1) + diphosphate. The catalysed reaction is ATP + H2O = ADP + phosphate + H(+). It carries out the reaction Thiol-dependent hydrolysis of ester, thioester, amide, peptide and isopeptide bonds formed by the C-terminal Gly of ubiquitin (a 76-residue protein attached to proteins as an intracellular targeting signal).. The enzyme catalyses uridylyl-uridylyl-ribonucleotide-RNA = a 3'-end uridylyl-2',3'-cyclophospho-uridine-RNA + a 5'-end dephospho-ribonucleoside-RNA. In terms of biological role, the replicase polyprotein 1ab is a multifunctional protein: it contains the activities necessary for the transcription of negative stranded RNA, leader RNA, subgenomic mRNAs and progeny virion RNA as well as proteinases responsible for the cleavage of the polyprotein into functional products. Functionally, nsp1 is essential for viral subgenomic mRNA synthesis. Its function is as follows. Nsp2 cysteine proteinase which cleaves the nsp2/nsp3 site in the polyprotein. Also displays deubiquitinating and deISGylase activities. The deubiquitinating activity cleaves both ubiquitinated and ISGylated products and may therefore regulate ubiquitin and ISG15 dependent host innate immunity. The 3C-like serine proteinase chain is responsible for the majority of cleavages as it cleaves the C-terminus of the polyprotein. In terms of biological role, the helicase chain, which contains a zinc finger structure, displays RNA and DNA duplex-unwinding activities with 5' to 3' polarity. Functionally, plays a role in viral transcription/replication and prevents the simultaneous activation of host cell dsRNA sensors, such as MDA5/IFIH1, OAS, and PKR. Acts by degrading the 5'-polyuridines generated during replication of the poly(A) region of viral genomic and subgenomic RNAs. Catalyzes a two-step reaction in which a 2'3'-cyclic phosphate (2'3'-cP) is first generated by 2'-O transesterification, which is then hydrolyzed to a 3'-phosphate (3'-P). If not degraded, poly(U) RNA would hybridize with poly(A) RNA tails and activate host dsRNA sensors. This Equidae (horses) protein is Replicase polyprotein 1ab (rep).